Reading from the N-terminus, the 148-residue chain is NADH-quinone oxidoreductase subunit K 2 (148 aa).

A run of 3 helical transmembrane segments spans residues 3-23 (LAYP…GVLA), 28-48 (ILVL…LVAF), and 64-84 (LFTI…VLAV). The tract at residues 96–148 (LRDTAETDAAETLPDDAGTGPSGTDAAPNGDTTTATGRPGDNAGKNKKAEATR) is disordered.

The protein belongs to the complex I subunit 4L family. NDH-1 is composed of 14 different subunits. Subunits NuoA, H, J, K, L, M, N constitute the membrane sector of the complex.

The protein localises to the cell membrane. It catalyses the reaction a quinone + NADH + 5 H(+)(in) = a quinol + NAD(+) + 4 H(+)(out). NDH-1 shuttles electrons from NADH, via FMN and iron-sulfur (Fe-S) centers, to quinones in the respiratory chain. The immediate electron acceptor for the enzyme in this species is believed to be a menaquinone. Couples the redox reaction to proton translocation (for every two electrons transferred, four hydrogen ions are translocated across the cytoplasmic membrane), and thus conserves the redox energy in a proton gradient. In Streptomyces griseus subsp. griseus (strain JCM 4626 / CBS 651.72 / NBRC 13350 / KCC S-0626 / ISP 5235), this protein is NADH-quinone oxidoreductase subunit K 2.